Consider the following 301-residue polypeptide: GTPase Era (301 aa).

Residues 6-173 (KSGFVAIVGR…LEQTNANLEI (168 aa)) enclose the Era-type G domain. Positions 14–21 (GRPNVGKS) are G1. 14–21 (GRPNVGKS) is a GTP binding site. Residues 40-44 (QTTRN) form a G2 region. The tract at residues 61–64 (DTPG) is G3. GTP-binding positions include 61–65 (DTPGI) and 123–126 (NKID). A G4 region spans residues 123-126 (NKID). The G5 stretch occupies residues 152 to 154 (ISA). One can recognise a KH type-2 domain in the interval 204–282 (TREEVPHSVA…FLEIWVKVQK (79 aa)).

This sequence belongs to the TRAFAC class TrmE-Era-EngA-EngB-Septin-like GTPase superfamily. Era GTPase family. As to quaternary structure, monomer.

Its subcellular location is the cytoplasm. The protein localises to the cell membrane. An essential GTPase that binds both GDP and GTP, with rapid nucleotide exchange. Plays a role in 16S rRNA processing and 30S ribosomal subunit biogenesis and possibly also in cell cycle regulation and energy metabolism. The polypeptide is GTPase Era (Listeria monocytogenes serotype 4b (strain F2365)).